We begin with the raw amino-acid sequence, 444 residues long: RING finger and transmembrane domain-containing protein 2 (444 aa).

Residues 1-181 (MWLFTVNQVL…ILLAKLCFQH (181 aa)) are Extracellular-facing. Disordered stretches follow at residues 13–41 (MQRR…ASVD) and 92–149 (PASR…PGTP). Over residues 107-121 (YHHRQPHHHFHHGGH) the composition is skewed to basic residues. Positions 131-140 (GGDHRGHSEE) are enriched in basic and acidic residues. Residues 182–202 (KLGIAVCIGMASTFAYANSTL) traverse the membrane as a helical segment. At 203–214 (REQVSLKEKRSV) the chain is on the cytoplasmic side. Residues 215 to 235 (LVILWILAFLAGNTLYVLYTF) traverse the membrane as a helical segment. Topologically, residues 236-255 (SSQQLYNSLIFLKPNLETLD) are extracellular. The chain crosses the membrane as a helical span at residues 256 to 276 (FFDLLWIVGIADFVLKYITIA). Over 277 to 329 (LKCLIVALPKIILAVKSKGKFYLVIEELSQLFRSLVPIQLWYKYIMGDDSSNS) the chain is Cytoplasmic. A helical transmembrane segment spans residues 330-350 (YFLGGVLIVLYSLCKSFDICG). Over 351-444 (RVGGVRKALK…GATSAHFQVY (94 aa)) the chain is Extracellular. The RING-type; degenerate zinc finger occupies 384–422 (CAICQAEFREPLILLCQHVFCEECLCLWLDRERTCPLSR).

Its subcellular location is the membrane. Its function is as follows. E3 ubiquitin-protein ligase that negatively regulates IL3-dependent cellular responses through IL3RA ubiquitination and degradation by the proteasome, having an anti-inflammatory effect. This Pongo abelii (Sumatran orangutan) protein is RING finger and transmembrane domain-containing protein 2 (RNFT2).